The following is a 334-amino-acid chain: HTH-type transcriptional repressor PurR (334 aa).

Residues 2-56 (ATIKDVARLAGVSTTTVSHVINKTRFVAEATQEKVMKAVDELNYAPSAVARSLKC) form the HTH lacI-type domain. The H-T-H motif DNA-binding region spans 4-23 (IKDVARLAGVSTTTVSHVIN). A DNA-binding region spans residues 48–56 (SAVARSLKC). Residues Phe73, Lys189, Phe220, and Asp274 each coordinate hypoxanthine.

Homodimer.

Its pathway is purine metabolism; purine nucleotide biosynthesis [regulation]. Is the main repressor of the genes involved in the de novo synthesis of purine nucleotides, regulating purB, purC, purEK, purF, purHD, purL, purMN and guaBA expression. PurR is allosterically activated to bind its cognate DNA by binding the purine corepressors, hypoxanthine or guanine, thereby effecting transcription repression. The sequence is that of HTH-type transcriptional repressor PurR from Vibrio parahaemolyticus serotype O3:K6 (strain RIMD 2210633).